The chain runs to 180 residues: Hypoxanthine-guanine phosphoribosyltransferase (180 aa).

K43 and G44 together coordinate diphosphate. The Mg(2+) site is built by E99 and D100. The active-site Proton acceptor is D103. Residues K131, 152-153 (FI), and D159 each bind GMP. R165 contacts diphosphate.

This sequence belongs to the purine/pyrimidine phosphoribosyltransferase family. Mg(2+) is required as a cofactor.

It localises to the cytoplasm. It carries out the reaction IMP + diphosphate = hypoxanthine + 5-phospho-alpha-D-ribose 1-diphosphate. The catalysed reaction is GMP + diphosphate = guanine + 5-phospho-alpha-D-ribose 1-diphosphate. Its pathway is purine metabolism; IMP biosynthesis via salvage pathway; IMP from hypoxanthine: step 1/1. The protein operates within purine metabolism; GMP biosynthesis via salvage pathway; GMP from guanine: step 1/1. Purine salvage pathway enzyme that catalyzes the transfer of the ribosyl-5-phosphate group from 5-phospho-alpha-D-ribose 1-diphosphate (PRPP) to the N9 position of the 6-oxopurines hypoxanthine and guanine to form the corresponding ribonucleotides IMP (inosine 5'-monophosphate) and GMP (guanosine 5'-monophosphate), with the release of PPi. This is Hypoxanthine-guanine phosphoribosyltransferase (hpt) from Streptococcus thermophilus (strain CNRZ 1066).